Here is a 688-residue protein sequence, read N- to C-terminus: Potassium-transporting ATPase ATP-binding subunit (688 aa).

4 consecutive transmembrane segments (helical) span residues 37 to 57 (FLVY…LVGI), 65 to 85 (ILGI…AEAI), 219 to 239 (IALQ…TVSL), and 262 to 282 (VALL…SIGI). The active-site 4-aspartylphosphate intermediate is the D313. Residues D350, E354, 383–390 (FTAKTRMS), and K401 contribute to the ATP site. Residues D524 and D528 each contribute to the Mg(2+) site. Transmembrane regions (helical) follow at residues 594-614 (FAII…LNIM), 622-642 (AIFS…PLAL), and 668-688 (IIVP…IGIV).

This sequence belongs to the cation transport ATPase (P-type) (TC 3.A.3) family. Type IA subfamily. In terms of assembly, the system is composed of three essential subunits: KdpA, KdpB and KdpC.

The protein resides in the cell membrane. The catalysed reaction is K(+)(out) + ATP + H2O = K(+)(in) + ADP + phosphate + H(+). Its function is as follows. Part of the high-affinity ATP-driven potassium transport (or Kdp) system, which catalyzes the hydrolysis of ATP coupled with the electrogenic transport of potassium into the cytoplasm. This subunit is responsible for energy coupling to the transport system and for the release of the potassium ions to the cytoplasm. The sequence is that of Potassium-transporting ATPase ATP-binding subunit from Clostridium botulinum (strain Eklund 17B / Type B).